We begin with the raw amino-acid sequence, 479 residues long: tRNA-2-methylthio-N(6)-dimethylallyladenosine synthase (479 aa).

The MTTase N-terminal domain maps to lysine 3–glutamate 120. [4Fe-4S] cluster-binding residues include cysteine 12, cysteine 49, cysteine 83, cysteine 157, cysteine 161, and cysteine 164. The Radical SAM core domain occupies lysine 143–alanine 375. The TRAM domain occupies arginine 378–arginine 441.

The protein belongs to the methylthiotransferase family. MiaB subfamily. In terms of assembly, monomer. It depends on [4Fe-4S] cluster as a cofactor.

The protein resides in the cytoplasm. It carries out the reaction N(6)-dimethylallyladenosine(37) in tRNA + (sulfur carrier)-SH + AH2 + 2 S-adenosyl-L-methionine = 2-methylsulfanyl-N(6)-dimethylallyladenosine(37) in tRNA + (sulfur carrier)-H + 5'-deoxyadenosine + L-methionine + A + S-adenosyl-L-homocysteine + 2 H(+). In terms of biological role, catalyzes the methylthiolation of N6-(dimethylallyl)adenosine (i(6)A), leading to the formation of 2-methylthio-N6-(dimethylallyl)adenosine (ms(2)i(6)A) at position 37 in tRNAs that read codons beginning with uridine. The chain is tRNA-2-methylthio-N(6)-dimethylallyladenosine synthase from Idiomarina loihiensis (strain ATCC BAA-735 / DSM 15497 / L2-TR).